The sequence spans 255 residues: Adenosylcobinamide-GDP ribazoletransferase (255 aa).

7 helical membrane-spanning segments follow: residues 33 to 53 (IFLPAYGLVTGGILALIIELF), 57 to 77 (FPGFFWAGVIIAGQIYLSGAL), 107 to 127 (VGSMAVAFFGAFLILKYGSYA), 136 to 156 (FTVLISEIILRGTGYLVIYSF), 174 to 194 (AGLIFTLGQTLIFTLGAAAFF), 196 to 216 (FSLIKILIILLLAYLFAFVVA), and 234 to 254 (IMELTGLFVPVAVLLINNIGV).

This sequence belongs to the CobS family. The cofactor is Mg(2+).

It localises to the cell membrane. The catalysed reaction is alpha-ribazole + adenosylcob(III)inamide-GDP = adenosylcob(III)alamin + GMP + H(+). It carries out the reaction alpha-ribazole 5'-phosphate + adenosylcob(III)inamide-GDP = adenosylcob(III)alamin 5'-phosphate + GMP + H(+). Its pathway is cofactor biosynthesis; adenosylcobalamin biosynthesis; adenosylcobalamin from cob(II)yrinate a,c-diamide: step 7/7. Its function is as follows. Joins adenosylcobinamide-GDP and alpha-ribazole to generate adenosylcobalamin (Ado-cobalamin). Also synthesizes adenosylcobalamin 5'-phosphate from adenosylcobinamide-GDP and alpha-ribazole 5'-phosphate. This chain is Adenosylcobinamide-GDP ribazoletransferase, found in Carboxydothermus hydrogenoformans (strain ATCC BAA-161 / DSM 6008 / Z-2901).